Reading from the N-terminus, the 843-residue chain is Probable disease resistance protein At5g47250 (843 aa).

Residues 28-58 (MLKENLVLLKSAFDELKAEKEDVVNRVNAGE) are a coiled coil. Positions 141–440 (TEQPPPPVVE…GEGFIDEKDG (300 aa)) constitute an NB-ARC domain. ATP is bound at residue 183–190 (GMGGVGKT). LRR repeat units follow at residues 510–531 (TVTK…PEFP), 535–556 (NLVT…FFLV), 559–581 (TLVV…ISAL), 583–604 (SLRL…LGVL), and 606–628 (KLIH…SELQ).

Belongs to the disease resistance NB-LRR family.

Functionally, probable disease resistance protein. The chain is Probable disease resistance protein At5g47250 from Arabidopsis thaliana (Mouse-ear cress).